The following is a 190-amino-acid chain: Nucleoside triphosphate pyrophosphatase (190 aa).

Asp-69 functions as the Proton acceptor in the catalytic mechanism.

It belongs to the Maf family. A divalent metal cation serves as cofactor.

The protein localises to the cytoplasm. It carries out the reaction a ribonucleoside 5'-triphosphate + H2O = a ribonucleoside 5'-phosphate + diphosphate + H(+). The enzyme catalyses a 2'-deoxyribonucleoside 5'-triphosphate + H2O = a 2'-deoxyribonucleoside 5'-phosphate + diphosphate + H(+). Nucleoside triphosphate pyrophosphatase. May have a dual role in cell division arrest and in preventing the incorporation of modified nucleotides into cellular nucleic acids. The chain is Nucleoside triphosphate pyrophosphatase from Helicobacter pylori (strain Shi470).